We begin with the raw amino-acid sequence, 160 residues long: MENVKVENLLINYKTLEKFKRFREYGNQELTMMEDLENNIIENDSKSPFYGIYFGNNLIARMSLYEVSKQYDYYFEPSQDYLTLWKLEVLPDYQNKGYGEVLVNFAKSFELPIKTNPRINSHGFWEKMGFIKAHYEMERDLGENPLIWLPEGVKEKDMKS.

The N-acetyltransferase domain maps to 9-151 (LLINYKTLEK…GENPLIWLPE (143 aa)).

This is an uncharacterized protein from Oceanobacillus iheyensis (strain DSM 14371 / CIP 107618 / JCM 11309 / KCTC 3954 / HTE831).